The primary structure comprises 211 residues: Protein-L-isoaspartate O-methyltransferase (211 aa).

Residue Ser-62 is part of the active site.

This sequence belongs to the methyltransferase superfamily. L-isoaspartyl/D-aspartyl protein methyltransferase family.

It localises to the cytoplasm. The catalysed reaction is [protein]-L-isoaspartate + S-adenosyl-L-methionine = [protein]-L-isoaspartate alpha-methyl ester + S-adenosyl-L-homocysteine. Functionally, catalyzes the methyl esterification of L-isoaspartyl residues in peptides and proteins that result from spontaneous decomposition of normal L-aspartyl and L-asparaginyl residues. It plays a role in the repair and/or degradation of damaged proteins. The chain is Protein-L-isoaspartate O-methyltransferase from Shewanella denitrificans (strain OS217 / ATCC BAA-1090 / DSM 15013).